The sequence spans 451 residues: MAAKVADDVANLKLDDSNTKPASGAAENGDKPTGDAEHEDSDDDNEAEEGAPEAGEGAAKKKKKRKPRKKKKAGAAGAGGAKTQTAPPRVRIDEVFPNDSYPEGEIQEYVNENAYRTTNEEKRHLDRMNNDFLTEYRKGAEIHREVRQWAQKWIKPGMGLTEIAEGIEDSVRALTGHQGLGNGDAQIAGMGFPTGLSINHCAAHYTPNAGNKMVVNYEDVMKVDFGVHINGRIVDSAFTLTFDPVYDNLVNACKAATNAGIKEAGIDVRMSDIGAAIQEVMESYEVEIKGEMLPVKCIRNLNGHSIGHYTIHGGKTVPIVKGGDQTKMEEGETFAIETFGSTGKGYVRDDMETSHYAMKADAPKVALRVSSAKTLLNSITKNFGTLPFCRRYLDRMGHDKYLLGLNNLVSAGIVEAYPPLCDIKGSYTAQSEHTFVLRPTCKEVLSRGDDY.

A disordered region spans residues 1-101 (MAAKVADDVA…IDEVFPNDSY (101 aa)). Positions 37-51 (EHEDSDDDNEAEEGA) are enriched in acidic residues. A compositionally biased stretch (basic residues) spans 60–73 (KKKKKRKPRKKKKA). A substrate-binding site is contributed by H204. Residues D224, D235, and H304 each coordinate a divalent metal cation. H312 provides a ligand contact to substrate. The a divalent metal cation site is built by E337 and E432.

This sequence belongs to the peptidase M24A family. Methionine aminopeptidase eukaryotic type 2 subfamily. Co(2+) is required as a cofactor. Requires Zn(2+) as cofactor. The cofactor is Mn(2+). Fe(2+) serves as cofactor.

Its subcellular location is the cytoplasm. The catalysed reaction is Release of N-terminal amino acids, preferentially methionine, from peptides and arylamides.. In terms of biological role, cotranslationally removes the N-terminal methionine from nascent proteins. The N-terminal methionine is often cleaved when the second residue in the primary sequence is small and uncharged (Met-Ala-, Cys, Gly, Pro, Ser, Thr, or Val). This Pyrenophora tritici-repentis (strain Pt-1C-BFP) (Wheat tan spot fungus) protein is Methionine aminopeptidase 2-2.